The primary structure comprises 1029 residues: Toll-like receptor 9 (1029 aa).

A signal peptide spans 1-24 (MGPYCAPHPLSLLVQAAALAAALA). The Extracellular portion of the chain corresponds to 25–815 (EGTLPAFLPC…LCLDETLSLD (791 aa)). The cysteines at positions 34 and 44 are disulfide-linked. 46–50 (WLFLK) serves as a coordination point for DNA. LRR repeat units follow at residues 61–84 (RANV…DFVH), 86–109 (SNLR…HFPC), 121–146 (VPTL…SLVS), 149–165 (LSHT…FTGL), 166–189 (HALR…ALEV), 197–220 (LGNL…LPPS), 222–241 (DTLL…DLAN), 242–267 (LTAL…CREC), 282–305 (LSRL…WFRG), 307–331 (GRLQ…IFND), 332–355 (LTQL…HLHL), 362–385 (LVSL…TLQS), 389–412 (LPKL…IFGA), 414–439 (PSLL…LGEV), 469–492 (CNLN…MFTR), 494–517 (SRLQ…QFVP), 518–541 (LTSL…SFTE), 543–570 (PQLE…SFVA), 572–596 (LPSL…LSSA), 598–620 (LRAL…LYLC), 625–648 (LRNL…HLDN), 650–673 (PKSL…SLTV), 674–697 (LPRL…SLPP), 699–721 (IRLQ…FFVR), 722–745 (ATRL…WFGS), and 747–770 (AGTL…AFVD). Asn-63 carries an N-linked (GlcNAc...) asparagine glycan. DNA contacts are provided by residues 71 to 76 (SNRIHH) and 94 to 108 (KWNC…MHFP). Cysteines 97 and 109 form a disulfide. A glycan (N-linked (GlcNAc...) asparagine) is linked at Asn-128. Tyr-131 serves as a coordination point for DNA. Cys-177 and Cys-183 are joined by a disulfide. DNA is bound at residue 178 to 180 (YYM). A glycan (N-linked (GlcNAc...) asparagine) is linked at Asn-199. Tyr-207 contributes to the DNA binding site. N-linked (GlcNAc...) asparagine glycosylation is found at Asn-209 and Asn-241. 2 disulfides stabilise this stretch: Cys-254-Cys-267 and Cys-257-Cys-264. A lipid anchor (S-palmitoyl cysteine) is attached at Cys-257. Arg-261 serves as a coordination point for DNA. A lipid anchor (S-palmitoyl cysteine) is attached at Cys-264. Asn-339 and Asn-380 each carry an N-linked (GlcNAc...) asparagine glycan. Cysteines 469 and 498 form a disulfide. Asn-472 and Asn-511 each carry an N-linked (GlcNAc...) asparagine glycan. The N-linked (GlcNAc...) asparagine glycan is linked to Asn-565. 2 N-linked (GlcNAc...) asparagine glycosylation sites follow: Asn-667 and Asn-692. N-linked (GlcNAc...) asparagine glycosylation is present at Asn-729. Cystine bridges form between Cys-762–Cys-788 and Cys-764–Cys-807. Residues 816–836 (CFGLSLLMVALGLAVPMLHHL) traverse the membrane as a helical segment. The Cytoplasmic portion of the chain corresponds to 837-1029 (CGWDLWYCFH…NFCRGPTTAE (193 aa)). One can recognise a TIR domain in the interval 864 to 1009 (LLYDAVVVFD…SFWANLGIAL (146 aa)).

It belongs to the Toll-like receptor family. In terms of assembly, monomer and homodimer. Exists as a monomer in the absence of unmethylated cytidine-phosphate-guanosine (CpG) ligand. Proteolytic processing of an insertion loop (Z-loop) is required for homodimerization upon binding to the unmethylated CpG ligand leading to its activation. Interacts with MYD88 via their respective TIR domains. Interacts with BTK. Interacts (via transmembrane domain) with UNC93B1. Interacts with CD300LH; the interaction may promote full activation of TLR9-triggered innate responses. Interacts with CNPY3 and HSP90B1; this interaction is required for proper folding in the endoplasmic reticulum. Interacts with SMPDL3B. Interacts with CD82; this interaction is essential for TLR9-dependent myddosome formation in response to CpG stimulation. Activated by proteolytic cleavage of the flexible loop between repeats LRR14 and LRR15 within the ectodomain. Cleavage requires UNC93B1. Proteolytically processed by first removing the majority of the ectodomain by either asparagine endopeptidase (AEP) or a cathepsin followed by a trimming event that is solely cathepsin mediated and required for optimal receptor signaling. Post-translationally, palmitoylated by ZDHHC3 in the Golgi regulates TLR9 trafficking from the Golgi to endosomes. Depalmitoylation by PPT1 controls the release of TLR9 from UNC93B1 in endosomes.

It is found in the endoplasmic reticulum membrane. The protein resides in the endosome. Its subcellular location is the lysosome. The protein localises to the cytoplasmic vesicle. It localises to the phagosome. Functionally, key component of innate and adaptive immunity. TLRs (Toll-like receptors) control host immune response against pathogens through recognition of molecular patterns specific to microorganisms. TLR9 is a nucleotide-sensing TLR which is activated by unmethylated cytidine-phosphate-guanosine (CpG) dinucleotides. Acts via MYD88 and TRAF6, leading to NF-kappa-B activation, cytokine secretion and the inflammatory response. Upon CpG stimulation, induces B-cell proliferation, activation, survival and antibody production. This Bos taurus (Bovine) protein is Toll-like receptor 9 (TLR9).